The sequence spans 227 residues: 2-C-methyl-D-erythritol 4-phosphate cytidylyltransferase (227 aa).

It belongs to the IspD/TarI cytidylyltransferase family. IspD subfamily.

The catalysed reaction is 2-C-methyl-D-erythritol 4-phosphate + CTP + H(+) = 4-CDP-2-C-methyl-D-erythritol + diphosphate. It functions in the pathway isoprenoid biosynthesis; isopentenyl diphosphate biosynthesis via DXP pathway; isopentenyl diphosphate from 1-deoxy-D-xylulose 5-phosphate: step 2/6. In terms of biological role, catalyzes the formation of 4-diphosphocytidyl-2-C-methyl-D-erythritol from CTP and 2-C-methyl-D-erythritol 4-phosphate (MEP). This chain is 2-C-methyl-D-erythritol 4-phosphate cytidylyltransferase, found in Thermosipho melanesiensis (strain DSM 12029 / CIP 104789 / BI429).